The sequence spans 35 residues: PTEN upstream open reading frame MP31 (35 aa).

As to quaternary structure, interacts with lactate dehydrogenases LDHA and LDHB; interaction with mitochondrial LDH leads to inhibition of lactate dehydrogenase activity, preventing conversion of lactate to pyruvate. In terms of tissue distribution, detected in brain, kidney and liver (at protein level).

It is found in the mitochondrion. Inhibits lactate dehydrogenase (LDH)-mediated conversion of lactate to pyruvate in mitochondria by competing with mitochondrial LDH for binding to NAD(+). Also inhibits cellular lactate utilization. This Mus musculus (Mouse) protein is PTEN upstream open reading frame MP31.